The chain runs to 314 residues: GTPase Era (314 aa).

Residues 21–189 (KSGFVGIIGR…QNTLIEQLEP (169 aa)) enclose the Era-type G domain. The G1 stretch occupies residues 29-36 (GRPNVGKS). Residue 29 to 36 (GRPNVGKS) participates in GTP binding. A G2 region spans residues 55–59 (QTTRN). The interval 76–79 (DTPG) is G3. GTP-binding positions include 76–80 (DTPGI) and 138–141 (NKSD). The G4 stretch occupies residues 138–141 (NKSD). The G5 stretch occupies residues 168-170 (FSA). The KH type-2 domain maps to 212-296 (IREQILQLTR…FLKLFVKVEP (85 aa)).

Belongs to the TRAFAC class TrmE-Era-EngA-EngB-Septin-like GTPase superfamily. Era GTPase family. As to quaternary structure, monomer.

Its subcellular location is the cytoplasm. The protein resides in the cell inner membrane. In terms of biological role, an essential GTPase that binds both GDP and GTP, with rapid nucleotide exchange. Plays a role in 16S rRNA processing and 30S ribosomal subunit biogenesis and possibly also in cell cycle regulation and energy metabolism. This Crocosphaera subtropica (strain ATCC 51142 / BH68) (Cyanothece sp. (strain ATCC 51142)) protein is GTPase Era.